A 717-amino-acid chain; its full sequence is Ubinuclein-2 (717 aa).

Disordered stretches follow at residues 114 to 136 (KDGSDGEELDGAPDDDDYDTEDS), 166 to 308 (LERI…SAKS), and 620 to 717 (ADSS…NLPS). Residues 118–136 (DGEELDGAPDDDDYDTEDS) are compositionally biased toward acidic residues. 2 stretches are compositionally biased toward polar residues: residues 214–246 (QSASPGPSSKKISNDSKTVQDSFSPLKAQNGND) and 285–308 (SSKSVHEQSNSPPGKSRPNVSAKS). The segment covering 623-632 (SFERSKQQHE) has biased composition (basic and acidic residues). A Nuclear localization signal motif is present at residues 634–641 (LKRTSSLS). Over residues 653–665 (KTEPALEETHLPA) the composition is skewed to basic and acidic residues. Residues 675–705 (RQTHLKSKTHKQVQVHPQSKAHKQAQVHPKA) are compositionally biased toward basic residues. Residues 706 to 717 (KTQTPPDLNLPS) are compositionally biased toward polar residues.

The protein belongs to the ubinuclein family. Component of the HIRA complex made of UBN1, UBN2, ASF1A, CABIN1 and HIRA. Interacts with HIRA.

The protein resides in the nucleus. It localises to the nucleolus. Its function is as follows. May be required for replication-independent chromatin assembly. This Arabidopsis thaliana (Mouse-ear cress) protein is Ubinuclein-2.